Consider the following 384-residue polypeptide: GDSL esterase/lipase ENOD8 (384 aa).

The N-terminal stretch at 1 to 31 (MKFMAKIELSRHIPLVTLIVLVLCITPPIFA) is a signal peptide. Serine 46 functions as the Nucleophile in the catalytic mechanism. 5 N-linked (GlcNAc...) asparagine glycosylation sites follow: asparagine 105, asparagine 191, asparagine 198, asparagine 276, and asparagine 330. Residues aspartate 349 and histidine 352 contribute to the active site.

Belongs to the 'GDSL' lipolytic enzyme family. As to expression, expressed in root nodules (at protein level).

The protein resides in the symbiosome. Functionally, has lipase and esterase activities. Probably involved in root nodule physiology. This chain is GDSL esterase/lipase ENOD8, found in Medicago truncatula (Barrel medic).